A 419-amino-acid chain; its full sequence is Dual specificity protein phosphatase 7 (419 aa).

A disordered region spans residues 1-47 (MKNQLRGPPARAHMSTSGAAAAGGTRAGSEPGAGSGSGAGTGAGAAT). The span at 10–29 (ARAHMSTSGAAAAGGTRAGS) shows a compositional bias: low complexity. A compositionally biased stretch (gly residues) spans 31 to 47 (PGAGSGSGAGTGAGAAT). The Rhodanese domain occupies 68 to 187 (GGASLLLLDC…FQTEYSEHCE (120 aa)). Residues 216–240 (CSDGESDRELPSSATESDGSPVPSS) form a disordered region. The span at 227-240 (SSATESDGSPVPSS) shows a compositional bias: polar residues. Residues 244–387 (FPVQILPYLY…LLDFERTLGL (144 aa)) enclose the Tyrosine-protein phosphatase domain. Cys331 acts as the Phosphocysteine intermediate in catalysis. 331-337 (CLAGISR) is a substrate binding site.

Belongs to the protein-tyrosine phosphatase family. Non-receptor class dual specificity subfamily. In terms of assembly, interacts with MAPK1/ERK2; the interaction enhances DUSP7 phosphatase activity. Strongly expressed in liver. Expressed at significantly higher levels in malignant hematopoietic cells than in corresponding non-malignant cells.

It is found in the cytoplasm. The enzyme catalyses O-phospho-L-tyrosyl-[protein] + H2O = L-tyrosyl-[protein] + phosphate. The catalysed reaction is O-phospho-L-seryl-[protein] + H2O = L-seryl-[protein] + phosphate. It catalyses the reaction O-phospho-L-threonyl-[protein] + H2O = L-threonyl-[protein] + phosphate. With respect to regulation, strongly inhibited by sodium orthovanadate. In terms of biological role, dual specificity protein phosphatase. Shows high activity towards MAPK1/ERK2. Also has lower activity towards MAPK14 and MAPK8. In arrested oocytes, plays a role in meiotic resumption. Promotes nuclear envelope breakdown and activation of the CDK1/Cyclin-B complex in oocytes, probably by dephosphorylating and inactivating the conventional protein kinase C (cPKC) isozyme PRKCB. May also inactivate PRKCA and/or PRKCG. Also important in oocytes for normal chromosome alignment on the metaphase plate and progression to anaphase, where it might regulate activity of the spindle-assembly checkpoint (SAC) complex. This is Dual specificity protein phosphatase 7 from Homo sapiens (Human).